Here is a 399-residue protein sequence, read N- to C-terminus: Probable dual-specificity RNA methyltransferase RlmN (399 aa).

Glutamate 102 functions as the Proton acceptor in the catalytic mechanism. The Radical SAM core domain maps to tyrosine 108–alanine 385. Cysteine 115 and cysteine 390 are oxidised to a cystine. Cysteine 122, cysteine 126, and cysteine 129 together coordinate [4Fe-4S] cluster. Residues glycine 207–glutamate 208, serine 239, serine 262–histidine 264, and asparagine 347 contribute to the S-adenosyl-L-methionine site. Cysteine 390 serves as the catalytic S-methylcysteine intermediate.

The protein belongs to the radical SAM superfamily. RlmN family. [4Fe-4S] cluster serves as cofactor.

The protein resides in the cytoplasm. It carries out the reaction adenosine(2503) in 23S rRNA + 2 reduced [2Fe-2S]-[ferredoxin] + 2 S-adenosyl-L-methionine = 2-methyladenosine(2503) in 23S rRNA + 5'-deoxyadenosine + L-methionine + 2 oxidized [2Fe-2S]-[ferredoxin] + S-adenosyl-L-homocysteine. It catalyses the reaction adenosine(37) in tRNA + 2 reduced [2Fe-2S]-[ferredoxin] + 2 S-adenosyl-L-methionine = 2-methyladenosine(37) in tRNA + 5'-deoxyadenosine + L-methionine + 2 oxidized [2Fe-2S]-[ferredoxin] + S-adenosyl-L-homocysteine. Functionally, specifically methylates position 2 of adenine 2503 in 23S rRNA and position 2 of adenine 37 in tRNAs. This is Probable dual-specificity RNA methyltransferase RlmN from Roseiflexus castenholzii (strain DSM 13941 / HLO8).